A 259-amino-acid chain; its full sequence is MSTAIIVVGANGRMGKTISHLAATESAFSLAGLVDSREHVESLAGASCPVGDSLAAVLPKAPGAVAIDFTAPSVSLQSARAVAASGHALVIGTTGFTDAEKDELHELAKKAPIFWASNMSIGVNVLCKILPELTRALGDAYDIEMVELHHNRKKDSPSGTALTLGECLAEARGWQLNDVRCSARDGIIGERPKAQIGIQAIRGGDVVGVHTVYFMGPGERIEVTHQAHSRDTFAQGALRAAAWLVGQKPGKLYGMRDMF.

9 to 14 (GANGRM) contacts NAD(+). Arginine 37 is an NADP(+) binding site. Residues 92 to 94 (GTT) and 116 to 119 (ASNM) contribute to the NAD(+) site. Catalysis depends on histidine 149, which acts as the Proton donor/acceptor. Histidine 150 contributes to the (S)-2,3,4,5-tetrahydrodipicolinate binding site. Lysine 153 (proton donor) is an active-site residue. Position 159 to 160 (159 to 160 (GT)) interacts with (S)-2,3,4,5-tetrahydrodipicolinate.

It belongs to the DapB family.

The protein resides in the cytoplasm. It carries out the reaction (S)-2,3,4,5-tetrahydrodipicolinate + NAD(+) + H2O = (2S,4S)-4-hydroxy-2,3,4,5-tetrahydrodipicolinate + NADH + H(+). It catalyses the reaction (S)-2,3,4,5-tetrahydrodipicolinate + NADP(+) + H2O = (2S,4S)-4-hydroxy-2,3,4,5-tetrahydrodipicolinate + NADPH + H(+). It participates in amino-acid biosynthesis; L-lysine biosynthesis via DAP pathway; (S)-tetrahydrodipicolinate from L-aspartate: step 4/4. Functionally, catalyzes the conversion of 4-hydroxy-tetrahydrodipicolinate (HTPA) to tetrahydrodipicolinate. This chain is 4-hydroxy-tetrahydrodipicolinate reductase, found in Desulfovibrio desulfuricans (strain ATCC 27774 / DSM 6949 / MB).